A 956-amino-acid polypeptide reads, in one-letter code: Cytolysin RtxA (956 aa).

A cholesterol recognition/amino acid consensus (CRAC) region 1 region spans residues 48-58 (LTIPKDYDIEK). Cholesterol recognition/amino acid consensus (CARC) region stretches follow at residues 280–287 (KAISSYVL) and 340–348 (KFGYDGDSL). The segment at 349–354 (LAEYQR) is cholesterol recognition/amino acid consensus (CRAC) region 2. The segment at 444 to 453 (RHAHYLERNL) is cholesterol recognition/amino acid consensus (CARC) region 3. Residue K558 is the site of N6-myristoyl lysine attachment. One copy of the Hemolysin-type calcium-binding 1 repeat lies at 613-639 (VNAGSGNDDIFAGQGKMNVDGGTGHDR). Residue K689 is the site of N6-myristoyl lysine attachment. Hemolysin-type calcium-binding repeat units follow at residues 722–756 (GSQFSDTFKGSKFADIFHGGDGNDTLEGNDGDDRL) and 757–791 (FGGNGDDHLYGGNGDDLLDGGKGNDVINGGDGNDV).

It belongs to the RTX prokaryotic toxin (TC 1.C.11) family. In terms of processing, myristoylated by RtxC; the toxin only becomes active when modified. Mainly myristoylated; a very minor fraction is acylated with hydroxymyristoyl, lauroyl and palmitoleyl chains fatty acyl groups. Fatty acylation is involved in binding to host membranes and promotes the irreversible insertion of RtxA into the host cell membrane.

It localises to the secreted. Its subcellular location is the host cell membrane. Bacterial cytolysin that attacks host cell membranes and causes cell rupture by forming a pore. Binds and permeabilizes target cells by forming cation-selective pores. Constitutes the key virulence cytotoxin of K.kingae. Binds cholesterol and oligosaccharides on the surface of host cells. Does not bind beta-2 integrin (ITGB2) on the host cell surface. This chain is Cytolysin RtxA, found in Kingella kingae.